The sequence spans 492 residues: Virion host shutoff protein (492 aa).

3 disordered regions span residues 110 to 130 (EEASDVDASPPPSPITDSRPS), 288 to 307 (SQARRAARRERANSRSLESM), and 334 to 371 (EDDYEEDPPLQPPDVAGGPRDGARSSSSEILTPPELVQ).

This sequence belongs to the herpesviridae VHS protein family. Interacts with human EIF4H, EIF4A1 and EIF4A2; interaction with eIF4AI and EIF4A2 presumably allows Vhs protein to associate with the eIF4F cap-binding complex.

The protein resides in the virion. In terms of biological role, minor structural protein that acts as an endoribonuclease during lytic infection. Degrades host mRNAs in the cytoplasm by cutting them at preferred sites, including some in regions of translation initiation. Together with inhibition of host splicing by ICP27, contributes to an overall decrease in host protein synthesis. Also, after the onset of viral transcription, accelerates the turnover of viral mRNA, thereby facilitating the sequential expression of different classes of viral genes. Binds translation initiation factors eIF4H, eIF4AI, and eIF4AII, thereby may interact directly with the translation initiation complex and thus digest specifically mRNAs. Also impedes antigen presentation by major histocompatibility complex class I and class II molecules, inhibits secretion of cytokines that would otherwise recruit lymphocytes and neutrophils cells to the site of infection and blocks the activation of dendritic cells. Impedes the alpha/beta interferon-mediated response to infection. Inhibits the integrated stress response (ISR) in the infected cell, this function requires the endonuclease activity. Stress granule formation is thus inhibited, which allows protein synthesis and viral replication. This Homo sapiens (Human) protein is Virion host shutoff protein (UL41).